A 282-amino-acid polypeptide reads, in one-letter code: Lipoyl synthase (282 aa).

Cys-37, Cys-42, Cys-48, Cys-63, Cys-67, Cys-70, and Ser-274 together coordinate [4Fe-4S] cluster. A Radical SAM core domain is found at 49–263 (WGKGTATFMI…KTIGLEKGFS (215 aa)).

This sequence belongs to the radical SAM superfamily. Lipoyl synthase family. The cofactor is [4Fe-4S] cluster.

It localises to the cytoplasm. The enzyme catalyses [[Fe-S] cluster scaffold protein carrying a second [4Fe-4S](2+) cluster] + N(6)-octanoyl-L-lysyl-[protein] + 2 oxidized [2Fe-2S]-[ferredoxin] + 2 S-adenosyl-L-methionine + 4 H(+) = [[Fe-S] cluster scaffold protein] + N(6)-[(R)-dihydrolipoyl]-L-lysyl-[protein] + 4 Fe(3+) + 2 hydrogen sulfide + 2 5'-deoxyadenosine + 2 L-methionine + 2 reduced [2Fe-2S]-[ferredoxin]. It participates in protein modification; protein lipoylation via endogenous pathway; protein N(6)-(lipoyl)lysine from octanoyl-[acyl-carrier-protein]: step 2/2. Catalyzes the radical-mediated insertion of two sulfur atoms into the C-6 and C-8 positions of the octanoyl moiety bound to the lipoyl domains of lipoate-dependent enzymes, thereby converting the octanoylated domains into lipoylated derivatives. This Bacteroides thetaiotaomicron (strain ATCC 29148 / DSM 2079 / JCM 5827 / CCUG 10774 / NCTC 10582 / VPI-5482 / E50) protein is Lipoyl synthase.